The chain runs to 387 residues: Probable serine protease FE772_23060 (387 aa).

It belongs to the peptidase S1 family.

In terms of biological role, possibly a dedicated protease for substrate gasdermin bGSDM; cleaves the bGSDM precursor, releasing the pore-forming moiety, which integrates into the membrane and triggers cell death. Involved in defense against bacteriophages. When this probable 4 gene operon (bGSDM-FE772_23060-FE772_23065-FE772_23070) is inserted into E.coli it provides nearly 100-fold protection against phages T5 and T6 and about 8-fold against phage T4. The operon without bGSDM no longer protects against phage. This chain is Probable serine protease FE772_23060, found in Lysobacter enzymogenes.